A 648-amino-acid chain; its full sequence is Glutenin, high molecular weight subunit DY10 (648 aa).

An N-terminal signal peptide occupies residues 1 to 21 (MAKRLVLFAAVVIALVALTTA). The disordered stretch occupies residues 127 to 648 (YYPGVTSPRQ…EGGDALSASQ (522 aa)). 3 stretches are compositionally biased toward low complexity: residues 141–166 (PGQA…QGQQ), 195–236 (QQPG…WQQG), and 243–263 (QQLG…GQQG). A compositionally biased stretch (polar residues) spans 264 to 274 (HYPTSLQQPGQ). Composition is skewed to low complexity over residues 284–353 (QQQP…GQQG), 360–416 (QQPG…GQQG), 459–502 (QQPG…PGQG), 510–523 (QGYY…PGQG), and 531–565 (QGHC…GQQG). Residues 578–592 (QQSGQGQQSGQGHQP) show a composition bias toward gly residues. Over residues 593–604 (GQGQQSGQEQQG) the composition is skewed to low complexity.

The protein belongs to the gliadin/glutenin family. Disulfide-bridge linked aggregates.

Glutenins are high-molecular weight seed storage proteins of wheat endosperm. Thought to be responsible for the visco-elastic property of wheat dough. In Triticum aestivum (Wheat), this protein is Glutenin, high molecular weight subunit DY10 (GLU-D1-2B).